A 78-amino-acid polypeptide reads, in one-letter code: MKVFIAVLSIAIVLIIIVSIQETTANTGEAETTFAVPNKKFTREDCKKECARRFTNGVLSKVIIAKLTGTKCYCKYKT.

A signal peptide spans 1–25 (MKVFIAVLSIAIVLIIIVSIQETTA).

In terms of processing, contains 2 disulfide bonds. Expressed by the venom gland.

The protein resides in the secreted. This chain is Scoloptoxin SSD996, found in Scolopendra dehaani (Thai centipede).